The following is a 255-amino-acid chain: Probable transcriptional regulatory protein CMM_1817 (255 aa).

The protein belongs to the TACO1 family.

It localises to the cytoplasm. The sequence is that of Probable transcriptional regulatory protein CMM_1817 from Clavibacter michiganensis subsp. michiganensis (strain NCPPB 382).